Consider the following 268-residue polypeptide: uncharacterized protein (268 aa).

An RING-type; degenerate zinc finger spans residues 21–61 (CVICLQKDGLRAQLSPCGHDQFDYSCICRWMDQSLTCPICK).

Its subcellular location is the mitochondrion. The protein localises to the nucleus. This is an uncharacterized protein from Schizosaccharomyces pombe (strain 972 / ATCC 24843) (Fission yeast).